The chain runs to 246 residues: 14-3-3 protein beta/alpha (246 aa).

The residue at position 1 (methionine 1) is an N-acetylmethionine; in 14-3-3 protein beta/alpha; alternate. The residue at position 1 (methionine 1) is an N-acetylmethionine. Threonine 2 carries the N-acetylthreonine; in 14-3-3 protein beta/alpha, N-terminally processed modification. A Phosphothreonine modification is found at threonine 2. Lysine 5 carries the N6-acetyllysine modification. Lysine 51 carries the post-translational modification N6-acetyllysine; alternate. Lysine 51 is covalently cross-linked (Glycyl lysine isopeptide (Lys-Gly) (interchain with G-Cter in SUMO2); alternate). Serine 60 is subject to Phosphoserine. N6-acetyllysine is present on lysine 70. 3'-nitrotyrosine occurs at positions 84 and 106. The residue at position 117 (lysine 117) is an N6-acetyllysine. A phosphoserine mark is found at serine 186 and serine 232.

The protein belongs to the 14-3-3 family. In terms of assembly, homodimer. Interacts with SAMSN1 and PRKCE. Interacts with AKAP13. Interacts with SSH1 and TORC2/CRTC2. Interacts with ABL1; the interaction results in cytoplasmic location of ABL1 and inhibition of cABL-mediated apoptosis. Interacts with ROR2 (dimer); the interaction results in phosphorylation of YWHAB on tyrosine residues. Interacts with GAB2. Interacts with YAP1 (phosphorylated form). Interacts with the phosphorylated (by AKT1) form of SRPK2. Interacts with PKA-phosphorylated AANAT. Interacts with MYO1C. Interacts with SIRT2. Interacts with the 'Thr-369' phosphorylated form of DAPK2. Interacts with PI4KB, TBC1D22A and TBC1D22B. Interacts with the 'Ser-1134' and 'Ser-1161' phosphorylated form of SOS1. Interacts (via phosphorylated form) with YWHAB; this interaction occurs in a protein kinase AKT1-dependent manner. Interacts with SLITRK1. Interacts with SYNPO2 (phosphorylated form); YWHAB competes with ACTN2 for interaction with SYNPO2. Interacts with RIPOR2 (via phosphorylated form) isoform 2; this interaction occurs in a chemokine-dependent manner and does not compete for binding of RIPOR2 with RHOA nor blocks inhibition of RIPOR2-mediated RHOA activity. Interacts with MARK2 and MARK3. Interacts with TESK1; the interaction is dependent on the phosphorylation of TESK1 'Ser-437' and inhibits TESK1 kinase activity. Interacts with MEFV. Interacts with HDAC4. Interacts with ADAM22 (via C-terminus). As to quaternary structure, (Microbial infection) Interacts with herpes simplex virus 1 protein UL46. (Microbial infection) Probably interacts with Chlamydia trachomatis protein IncG. Post-translationally, the alpha, brain-specific form differs from the beta form in being phosphorylated. Phosphorylated on Ser-60 by protein kinase C delta type catalytic subunit in a sphingosine-dependent fashion.

The protein resides in the cytoplasm. Its subcellular location is the melanosome. The protein localises to the vacuole membrane. Functionally, adapter protein implicated in the regulation of a large spectrum of both general and specialized signaling pathways. Binds to a large number of partners, usually by recognition of a phosphoserine or phosphothreonine motif. Binding generally results in the modulation of the activity of the binding partner. Negative regulator of osteogenesis. Blocks the nuclear translocation of the phosphorylated form (by AKT1) of SRPK2 and antagonizes its stimulatory effect on cyclin D1 expression resulting in blockage of neuronal apoptosis elicited by SRPK2. Negative regulator of signaling cascades that mediate activation of MAP kinases via AKAP13. In Homo sapiens (Human), this protein is 14-3-3 protein beta/alpha (YWHAB).